Reading from the N-terminus, the 320-residue chain is Beta-ketoacyl-[acyl-carrier-protein] synthase III (320 aa).

Active-site residues include Cys-114 and His-247. Positions 248–252 (QANRR) are ACP-binding. The active site involves Asn-277.

It belongs to the thiolase-like superfamily. FabH family. Homodimer.

It localises to the cytoplasm. It carries out the reaction malonyl-[ACP] + acetyl-CoA + H(+) = 3-oxobutanoyl-[ACP] + CO2 + CoA. It functions in the pathway lipid metabolism; fatty acid biosynthesis. Catalyzes the condensation reaction of fatty acid synthesis by the addition to an acyl acceptor of two carbons from malonyl-ACP. Catalyzes the first condensation reaction which initiates fatty acid synthesis and may therefore play a role in governing the total rate of fatty acid production. Possesses both acetoacetyl-ACP synthase and acetyl transacylase activities. Its substrate specificity determines the biosynthesis of branched-chain and/or straight-chain of fatty acids. In Neisseria meningitidis serogroup C (strain 053442), this protein is Beta-ketoacyl-[acyl-carrier-protein] synthase III.